We begin with the raw amino-acid sequence, 284 residues long: Proteasome subunit beta 1 (284 aa).

The propeptide at 1-56 (MASHDSYTGRLPGAFMNPGTSSFTEFLASYNPDLLPGRHMTALAGGMPGNVEAPHA) is removed in mature form; by autocatalysis. The active-site Nucleophile is the Thr57.

This sequence belongs to the peptidase T1B family. In terms of assembly, the 20S proteasome core is composed of 14 alpha and 14 beta subunits that assemble into four stacked heptameric rings, resulting in a barrel-shaped structure. The two inner rings, each composed of seven catalytic beta subunits, are sandwiched by two outer rings, each composed of seven alpha subunits. The catalytic chamber with the active sites is on the inside of the barrel. Has a gated structure, the ends of the cylinder being occluded by the N-termini of the alpha-subunits. Is capped by the proteasome-associated ATPase, ARC.

The protein localises to the cytoplasm. It carries out the reaction Cleavage of peptide bonds with very broad specificity.. It functions in the pathway protein degradation; proteasomal Pup-dependent pathway. With respect to regulation, the formation of the proteasomal ATPase ARC-20S proteasome complex, likely via the docking of the C-termini of ARC into the intersubunit pockets in the alpha-rings, may trigger opening of the gate for substrate entry. Interconversion between the open-gate and close-gate conformations leads to a dynamic regulation of the 20S proteasome proteolysis activity. Functionally, component of the proteasome core, a large protease complex with broad specificity involved in protein degradation. The protein is Proteasome subunit beta 1 of Thermomonospora curvata (strain ATCC 19995 / DSM 43183 / JCM 3096 / KCTC 9072 / NBRC 15933 / NCIMB 10081 / Henssen B9).